Reading from the N-terminus, the 226-residue chain is 7-cyano-7-deazaguanine synthase (226 aa).

Residue 7 to 17 coordinates ATP; the sequence is LSGGMDSLVTT. The Zn(2+) site is built by C187, C195, C198, and C201.

Belongs to the QueC family. It depends on Zn(2+) as a cofactor.

The catalysed reaction is 7-carboxy-7-deazaguanine + NH4(+) + ATP = 7-cyano-7-deazaguanine + ADP + phosphate + H2O + H(+). It participates in purine metabolism; 7-cyano-7-deazaguanine biosynthesis. Functionally, catalyzes the ATP-dependent conversion of 7-carboxy-7-deazaguanine (CDG) to 7-cyano-7-deazaguanine (preQ(0)). This chain is 7-cyano-7-deazaguanine synthase, found in Chloroherpeton thalassium (strain ATCC 35110 / GB-78).